Reading from the N-terminus, the 247-residue chain is Syntaxin-like protein fsv1 (247 aa).

Residues 27-94 adopt a coiled-coil conformation; that stretch reads NPDEEIESSL…FEKQRRASSI (68 aa). A disordered region spans residues 88 to 130; it reads QRRASSIPADGTSAFSANPQVASTNNKLTPLPSLQKTTSSSEG. Over residues 100–130 the composition is skewed to polar residues; that stretch reads SAFSANPQVASTNNKLTPLPSLQKTTSSSEG. The region spanning 159-221 is the t-SNARE coiled-coil homology domain; that stretch reads QQMLNEQEES…DHAKNRLNKV (63 aa).

Its subcellular location is the golgi apparatus membrane. It localises to the prevacuolar compartment membrane. Its function is as follows. Involved in vesicle-mediated protein transport between the Golgi and the vacuole. The chain is Syntaxin-like protein fsv1 (fsv1) from Schizosaccharomyces pombe (strain 972 / ATCC 24843) (Fission yeast).